Here is a 316-residue protein sequence, read N- to C-terminus: Beta-ketoacyl-[acyl-carrier-protein] synthase III 1 (316 aa).

Active-site residues include C112 and H243. The tract at residues 244 to 248 is ACP-binding; sequence QANYR. The active site involves N273.

The protein belongs to the thiolase-like superfamily. FabH family. Homodimer.

The protein localises to the cytoplasm. The enzyme catalyses malonyl-[ACP] + acetyl-CoA + H(+) = 3-oxobutanoyl-[ACP] + CO2 + CoA. Its pathway is lipid metabolism; fatty acid biosynthesis. Functionally, catalyzes the condensation reaction of fatty acid synthesis by the addition to an acyl acceptor of two carbons from malonyl-ACP. Catalyzes the first condensation reaction which initiates fatty acid synthesis and may therefore play a role in governing the total rate of fatty acid production. Possesses both acetoacetyl-ACP synthase and acetyl transacylase activities. Its substrate specificity determines the biosynthesis of branched-chain and/or straight-chain of fatty acids. This Vibrio cholerae serotype O1 (strain ATCC 39315 / El Tor Inaba N16961) protein is Beta-ketoacyl-[acyl-carrier-protein] synthase III 1.